A 58-amino-acid polypeptide reads, in one-letter code: Small ribosomal subunit protein bS21 (58 aa).

Positions 31–42 (EIRKREHYEKPS) are enriched in basic and acidic residues. The segment at 31-58 (EIRKREHYEKPSVKRKKKSEAARKRKYN) is disordered. Basic residues predominate over residues 43-58 (VKRKKKSEAARKRKYN).

It belongs to the bacterial ribosomal protein bS21 family.

The sequence is that of Small ribosomal subunit protein bS21 from Agathobacter rectalis (strain ATCC 33656 / DSM 3377 / JCM 17463 / KCTC 5835 / VPI 0990) (Eubacterium rectale).